Consider the following 300-residue polypeptide: UDP-N-acetylenolpyruvoylglucosamine reductase (300 aa).

Residues 29-193 (TGGPADLLVF…LSATFKLRSG (165 aa)) enclose the FAD-binding PCMH-type domain. Arginine 172 is a catalytic residue. The active-site Proton donor is serine 222. The active site involves glutamate 292.

This sequence belongs to the MurB family. It depends on FAD as a cofactor.

Its subcellular location is the cytoplasm. The enzyme catalyses UDP-N-acetyl-alpha-D-muramate + NADP(+) = UDP-N-acetyl-3-O-(1-carboxyvinyl)-alpha-D-glucosamine + NADPH + H(+). It functions in the pathway cell wall biogenesis; peptidoglycan biosynthesis. Its function is as follows. Cell wall formation. The polypeptide is UDP-N-acetylenolpyruvoylglucosamine reductase (Pediococcus pentosaceus (strain ATCC 25745 / CCUG 21536 / LMG 10740 / 183-1w)).